The following is a 234-amino-acid chain: MSFAEEFEANLVSLAHVLQKKYALLRDLDKSLQENQRQNEQRCEKEIEDIRRGRAGNITPNTSLTKFSEEALDEQKHSVRIADEKVTLAMQAYDLVDMHVQQLDQYMKKSDEVIRKEKEAAAATLELENNGKAGNAGEGGRGGRKKTRLATAASTAAASTGMTSSNMDLDLPVDPNEPTYCICNQVSFGEMVACDNNACKIEWFHFGCVGLKEQPKGKWYCPECATVKKSRKGR.

The tract at residues 129–166 (NNGKAGNAGEGGRGGRKKTRLATAASTAAASTGMTSSN) is disordered. Low complexity predominate over residues 149 to 165 (LATAASTAAASTGMTSS). The PHD-type zinc finger occupies 178–227 (PTYCICNQVSFGEMVACDNNACKIEWFHFGCVGLKEQPKGKWYCPECATV). Zn(2+)-binding residues include Cys-181, Cys-183, Cys-194, Cys-199, His-205, Cys-208, Cys-221, and Cys-224.

This sequence belongs to the ING family. As to quaternary structure, interacts with H3K4me3 and to a lesser extent with H3K4me2. Ubiquitously expressed.

The protein localises to the nucleus. Its function is as follows. Histone-binding component that specifically recognizes H3 tails trimethylated on 'Lys-4' (H3K4me3), which mark transcription start sites of virtually all active genes. The chain is PHD finger protein ING1 (ING1) from Arabidopsis thaliana (Mouse-ear cress).